We begin with the raw amino-acid sequence, 645 residues long: Glucans biosynthesis glucosyltransferase H (645 aa).

The disordered stretch occupies residues 1–28 (MDGTVTLSPAPTDLPPVSSLDAGQPTLP). The next 7 helical transmembrane spans lie at 64–84 (LIGG…SVLW), 98–118 (LFVL…AGFI), 423–443 (APMW…GAGI), 465–485 (AIWI…LGYI), 504–524 (ALSI…VMYL), 558–578 (SYGG…LVSP), and 580–600 (LAAW…VVAV).

It belongs to the glycosyltransferase 2 family. OpgH subfamily.

The protein resides in the cell inner membrane. It participates in glycan metabolism; osmoregulated periplasmic glucan (OPG) biosynthesis. Functionally, involved in the biosynthesis of osmoregulated periplasmic glucans (OPGs). The polypeptide is Glucans biosynthesis glucosyltransferase H (Xanthomonas campestris pv. campestris (strain 8004)).